Here is a 368-residue protein sequence, read N- to C-terminus: tRNA-specific 2-thiouridylase MnmA (368 aa).

ATP is bound by residues 11–18 and Met37; that span reads GMSGGVDS. The segment at 97 to 99 is interaction with target base in tRNA; that stretch reads NPD. Residue Cys102 is the Nucleophile of the active site. Cysteines 102 and 199 form a disulfide. Gly127 is a binding site for ATP. The tract at residues 149 to 151 is interaction with tRNA; it reads KDQ. The active-site Cysteine persulfide intermediate is Cys199. The interaction with tRNA stretch occupies residues 311-312; sequence RY.

Belongs to the MnmA/TRMU family. In terms of assembly, interacts with TusE.

The protein resides in the cytoplasm. It carries out the reaction S-sulfanyl-L-cysteinyl-[protein] + uridine(34) in tRNA + AH2 + ATP = 2-thiouridine(34) in tRNA + L-cysteinyl-[protein] + A + AMP + diphosphate + H(+). Its function is as follows. Catalyzes the 2-thiolation of uridine at the wobble position (U34) of tRNA(Lys), tRNA(Glu) and tRNA(Gln), leading to the formation of s(2)U34, the first step of tRNA-mnm(5)s(2)U34 synthesis. Sulfur is provided by IscS, via a sulfur-relay system. Binds ATP and its substrate tRNAs. In Klebsiella pneumoniae subsp. pneumoniae (strain ATCC 700721 / MGH 78578), this protein is tRNA-specific 2-thiouridylase MnmA.